The chain runs to 311 residues: Olfactory receptor 14I1 (311 aa).

Topologically, residues 1-26 (MDNLTKVTEFLLMEFSGIWELQVLHA) are extracellular. Asparagine 3 carries an N-linked (GlcNAc...) asparagine glycan. Residues 27-47 (GLFLLIYLAVLVGNLLIIAVI) traverse the membrane as a helical segment. Over 48–55 (TLDQHLHT) the chain is Cytoplasmic. The helical transmembrane segment at 56 to 76 (PMYFFLKNLSVLDLCYISVTV) threads the bilayer. At 77–92 (PKSIRNSLTRRSSISY) the chain is on the extracellular side. A helical transmembrane segment spans residues 93-113 (LGCVAQVYFFSAFASAELAFL). A disulfide bridge links cysteine 95 with cysteine 188. The Cytoplasmic segment spans residues 114 to 141 (TVMSYDRYVAICHPLQYRAVMTSGGCYQ). Residues 142–162 (MAVTTWLSCFSYAAVHTGNMF) form a helical membrane-spanning segment. Residues 163–189 (REHVCRSSVIHQFFRDIPHVLALVSCE) lie on the Extracellular side of the membrane. A helical transmembrane segment spans residues 190–210 (VFFVEFLTLALSSCLVLGCFI). The Cytoplasmic portion of the chain corresponds to 211 to 241 (LMMISYFQIFSTVLRIPSGQSRAKAFSTCSP). The helical transmembrane segment at 242 to 262 (QLIVIMLFLTTGLFAALGPIA) threads the bilayer. The Extracellular portion of the chain corresponds to 263–269 (KALSIQD). The chain crosses the membrane as a helical span at residues 270-290 (LVIALTYTVLPPFLNPIIYSL). Topologically, residues 291–311 (RNKEIKTAMWRLFVKIYFLQK) are cytoplasmic.

Belongs to the G-protein coupled receptor 1 family.

The protein resides in the cell membrane. Its function is as follows. Odorant receptor. This Homo sapiens (Human) protein is Olfactory receptor 14I1 (OR14I1).